We begin with the raw amino-acid sequence, 562 residues long: Bacillolysin (562 aa).

The N-terminal stretch at 1 to 24 (MKKKKQALKVLLSVGILSSSFAFA) is a signal peptide. Positions 25–245 (HTSSAAPNNV…KQAAKPAAKP (221 aa)) are cleaved as a propeptide — activation peptide. Positions 303, 305, and 384 each coordinate Ca(2+). His-388 is a binding site for Zn(2+). Glu-389 is a catalytic residue. Zn(2+)-binding residues include His-392 and Glu-412. 8 residues coordinate Ca(2+): Glu-423, Asn-429, Asp-431, Glu-433, Glu-436, Tyr-439, Thr-440, and Asp-446. His-477 serves as the catalytic Proton donor.

The protein belongs to the peptidase M4 family. Ca(2+) is required as a cofactor. The cofactor is Zn(2+).

It localises to the secreted. The catalysed reaction is Similar, but not identical, to that of thermolysin.. Its function is as follows. Extracellular zinc metalloprotease. In Priestia megaterium (strain DSM 319 / IMG 1521) (Bacillus megaterium), this protein is Bacillolysin (nprM).